The primary structure comprises 350 residues: Phenylalanine--tRNA ligase alpha subunit (350 aa).

Glu-271 is a binding site for Mg(2+).

This sequence belongs to the class-II aminoacyl-tRNA synthetase family. Phe-tRNA synthetase alpha subunit type 1 subfamily. As to quaternary structure, tetramer of two alpha and two beta subunits. Mg(2+) serves as cofactor.

The protein localises to the cytoplasm. It carries out the reaction tRNA(Phe) + L-phenylalanine + ATP = L-phenylalanyl-tRNA(Phe) + AMP + diphosphate + H(+). This Verminephrobacter eiseniae (strain EF01-2) protein is Phenylalanine--tRNA ligase alpha subunit.